Consider the following 292-residue polypeptide: Coatomer subunit epsilon-1 (292 aa).

It belongs to the COPE family. As to quaternary structure, oligomeric complex that consists of at least the alpha, beta, beta', gamma, delta, epsilon and zeta subunits.

The protein localises to the cytoplasm. The protein resides in the golgi apparatus membrane. It localises to the cytoplasmic vesicle. It is found in the COPI-coated vesicle membrane. Its function is as follows. The coatomer is a cytosolic protein complex that binds to dilysine motifs and reversibly associates with Golgi non-clathrin-coated vesicles, which further mediate biosynthetic protein transport from the ER, via the Golgi up to the trans Golgi network. The coatomer complex is required for budding from Golgi membranes, and is essential for the retrograde Golgi-to-ER transport of dilysine-tagged proteins. In Arabidopsis thaliana (Mouse-ear cress), this protein is Coatomer subunit epsilon-1.